Reading from the N-terminus, the 315-residue chain is Calumenin-B (315 aa).

Residues 1–19 (MEQWPLLFVVALCILQSSS) form the signal peptide. Positions 22–39 (MEKKDRVHHDAPLSNKDH) are enriched in basic and acidic residues. The interval 22–42 (MEKKDRVHHDAPLSNKDHDDE) is disordered. EF-hand domains follow at residues 68-103 (ESKERLGKIVEKIDEDHDGFVTADEMKRWIKHAQRR), 104-139 (WIYEDVDRQWQAHDLNSDSFVSWEEYKDATYGYILD), 151-186 (QMMTRDERRFKMADQDGDLRANKEEFTAFLHPEEFD), 188-223 (MKDIVVLETMEDIDKNGDGLIDLNEYIGDMYSQNGD), 229-264 (WVKTEREQFTEFRDKNKDGRMDKDETRDWILPADYD), and 265-300 (HAEAEAKHLLYESDADKDGRLTKQEIVDKYDLFVGS). Residues Asp81, Asp83, Asp85, Glu92, Asp117, Asn119, Asp121, Glu128, Asp164, Asp166, Asp168, Arg170, Glu175, Asp201, Asn203, Asp205, Glu212, Asp242, Asn244, Asp246, Arg248, Glu253, Asp278, Asp280, Asp282, Arg284, and Glu289 each coordinate Ca(2+). Positions 312–315 (HDEF) match the Prevents secretion from ER motif.

This sequence belongs to the CREC family. As to quaternary structure, interacts with ggcx.

It localises to the endoplasmic reticulum membrane. The protein resides in the golgi apparatus. It is found in the secreted. The protein localises to the melanosome. Its subcellular location is the sarcoplasmic reticulum lumen. In terms of biological role, involved in regulation of vitamin K-dependent carboxylation of multiple N-terminal glutamate residues. Seems to inhibit gamma-carboxylase ggcx. Binds 7 calcium ions with a low affinity. The protein is Calumenin-B (calub) of Danio rerio (Zebrafish).